Here is a 510-residue protein sequence, read N- to C-terminus: Histidine ammonia-lyase (510 aa).

Positions 143–145 (ASG) form a cross-link, 5-imidazolinone (Ala-Gly). The residue at position 144 (Ser144) is a 2,3-didehydroalanine (Ser).

The protein belongs to the PAL/histidase family. Contains an active site 4-methylidene-imidazol-5-one (MIO), which is formed autocatalytically by cyclization and dehydration of residues Ala-Ser-Gly.

The protein localises to the cytoplasm. The catalysed reaction is L-histidine = trans-urocanate + NH4(+). Its pathway is amino-acid degradation; L-histidine degradation into L-glutamate; N-formimidoyl-L-glutamate from L-histidine: step 1/3. The sequence is that of Histidine ammonia-lyase from Shewanella pealeana (strain ATCC 700345 / ANG-SQ1).